The primary structure comprises 164 residues: Leucine-rich single-pass membrane protein 2 (164 aa).

Residues 97-117 (GFLLLLALLVLTCLVLALLAV) traverse the membrane as a helical segment.

The protein localises to the membrane. This chain is Leucine-rich single-pass membrane protein 2 (LSMEM2), found in Homo sapiens (Human).